A 453-amino-acid chain; its full sequence is Bifunctional protein GlmU (453 aa).

Residues 1–226 (MKFSTVILAA…SIEVEGVNDR (226 aa)) form a pyrophosphorylase region. UDP-N-acetyl-alpha-D-glucosamine contacts are provided by residues 8–11 (LAAG), lysine 22, glutamine 73, 78–79 (GT), 100–102 (YGD), glycine 137, glutamate 151, asparagine 166, and asparagine 224. Residue aspartate 102 participates in Mg(2+) binding. Mg(2+) is bound at residue asparagine 224. A linker region spans residues 227–247 (IQLARLERAFQARQAKKLLEQ). The N-acetyltransferase stretch occupies residues 248–453 (GVMLRDPARF…AGWQRPAKKK (206 aa)). UDP-N-acetyl-alpha-D-glucosamine-binding residues include arginine 330 and lysine 348. The active-site Proton acceptor is the histidine 360. 2 residues coordinate UDP-N-acetyl-alpha-D-glucosamine: tyrosine 363 and asparagine 374. Acetyl-CoA-binding positions include alanine 377, 383–384 (NY), serine 402, alanine 420, and arginine 437.

This sequence in the N-terminal section; belongs to the N-acetylglucosamine-1-phosphate uridyltransferase family. In the C-terminal section; belongs to the transferase hexapeptide repeat family. Homotrimer. Mg(2+) serves as cofactor.

Its subcellular location is the cytoplasm. It catalyses the reaction alpha-D-glucosamine 1-phosphate + acetyl-CoA = N-acetyl-alpha-D-glucosamine 1-phosphate + CoA + H(+). The enzyme catalyses N-acetyl-alpha-D-glucosamine 1-phosphate + UTP + H(+) = UDP-N-acetyl-alpha-D-glucosamine + diphosphate. Its pathway is nucleotide-sugar biosynthesis; UDP-N-acetyl-alpha-D-glucosamine biosynthesis; N-acetyl-alpha-D-glucosamine 1-phosphate from alpha-D-glucosamine 6-phosphate (route II): step 2/2. The protein operates within nucleotide-sugar biosynthesis; UDP-N-acetyl-alpha-D-glucosamine biosynthesis; UDP-N-acetyl-alpha-D-glucosamine from N-acetyl-alpha-D-glucosamine 1-phosphate: step 1/1. It functions in the pathway bacterial outer membrane biogenesis; LPS lipid A biosynthesis. Its function is as follows. Catalyzes the last two sequential reactions in the de novo biosynthetic pathway for UDP-N-acetylglucosamine (UDP-GlcNAc). The C-terminal domain catalyzes the transfer of acetyl group from acetyl coenzyme A to glucosamine-1-phosphate (GlcN-1-P) to produce N-acetylglucosamine-1-phosphate (GlcNAc-1-P), which is converted into UDP-GlcNAc by the transfer of uridine 5-monophosphate (from uridine 5-triphosphate), a reaction catalyzed by the N-terminal domain. The protein is Bifunctional protein GlmU of Vibrio cholerae serotype O1 (strain M66-2).